A 395-amino-acid polypeptide reads, in one-letter code: Protein TAMALIN (395 aa).

The interval 1-52 is disordered; that stretch reads MTLRRLRKLQQKEEAAATPDPAARTPDSEVAPAAPVPTPGPPAAAATPGPPA. Positions 16-33 are enriched in low complexity; sequence AATPDPAARTPDSEVAPA. At threonine 77 the chain carries Phosphothreonine. Serine 94 bears the Phosphoserine mark. Residues 101–190 form the PDZ domain; the sequence is VLTLEKEDNQ…VLRLETLYGT (90 aa). Residues 181-258 form an interaction with PSCD3 region; sequence VLRLETLYGT…GAGLLPGSLP (78 aa). A Phosphotyrosine modification is found at tyrosine 237. The residue at position 270 (arginine 270) is an Omega-N-methylarginine. The tract at residues 293–349 is disordered; that stretch reads SEPPALPPPPPPARAFGPGPAETPAVGPGPGPRAALSRSASVRCAGPGGGGGGGAPG. A compositionally biased stretch (pro residues) spans 296-305; that stretch reads PALPPPPPPA. Over residues 338 to 348 the composition is skewed to gly residues; the sequence is GPGGGGGGGAP. Serine 387 carries the phosphoserine modification.

As to quaternary structure, heteromer. Composed of TAMALIN, CYTH2 and at least one GRM1. Also interacts with CYTH3, GRM2, GRM3 and GRM5.

It localises to the cytoplasm. The protein localises to the perinuclear region. It is found in the cell membrane. Its subcellular location is the postsynaptic cell membrane. Its function is as follows. Plays a role in intracellular trafficking and contributes to the macromolecular organization of group 1 metabotropic glutamate receptors (mGluRs) at synapses. The protein is Protein TAMALIN of Homo sapiens (Human).